A 313-amino-acid polypeptide reads, in one-letter code: Solute carrier family 35 member E3 (313 aa).

The next 9 membrane-spanning stretches (helical) occupy residues 17–37, 40–60, 71–91, 126–146, 154–174, 187–206, 225–245, 252–272, and 275–295; these read GLLFNLLVSICIVFLNKWIYV, GFPNMSLTLVHFVVTWLGLYI, SLPLSKLLLLALSFCGFVVFT, FSVRIQLTLIPITVGVILNSY, LGMVFAALGVVVTSLYQVWVG, LLYYQAPMSSAMLLVAVPFF, LMVLLSGIIAFMVNLSIYWII, TYNMFGHFKFCITLCGGYILF, and PLSVNQGLGILCTLFGILTYT.

This sequence belongs to the TPT transporter family. SLC35E subfamily.

The protein resides in the membrane. Its function is as follows. Putative transporter. This is Solute carrier family 35 member E3 (Slc35e3) from Mus musculus (Mouse).